The following is a 173-amino-acid chain: CASP-like protein 3A1 (173 aa).

Position 1 (methionine 1) is a topological domain, cytoplasmic. The chain crosses the membrane as a helical span at residues 2–22 (VDIALRSAVVAFMVVSLSAMF). The Extracellular portion of the chain corresponds to 23 to 48 (TSTQHSEVHIIGFSIPVSLRWNRSQP). Asparagine 44 carries an N-linked (GlcNAc...) asparagine glycan. Residues 49 to 69 (FEFLVVVELLICAYAFVQFVY) traverse the membrane as a helical segment. Topologically, residues 70-84 (QSVVLAKNAVPTRRC) are cytoplasmic. A helical membrane pass occupies residues 85–105 (IWVQLAADQVCAYLVLAAAAA). Topologically, residues 106–140 (AAGASRTNKSGFQSLGMQNIKVPGVCIVLDKFCNR) are extracellular. The N-linked (GlcNAc...) asparagine glycan is linked to asparagine 113. The helical transmembrane segment at 141 to 161 (ATIAIIFTLLAAGASGISVTL) threads the bilayer. At 162–173 (DVYMLTLTYYMG) the chain is on the cytoplasmic side.

The protein belongs to the Casparian strip membrane proteins (CASP) family. In terms of assembly, homodimer and heterodimers.

It is found in the cell membrane. The protein is CASP-like protein 3A1 of Pteridium aquilinum subsp. aquilinum (Bracken fern).